The following is a 142-amino-acid chain: MAAMTVHLDIVSAESKIFSGRVVSLQVTGSEGELGIMHGHAPLLSYIKPGMARIVKQDGSEEVFYLSGGILEVQPSTVSVLADVVMRAKDIDEQAALEAKRRAEAHMANAGADFNYDAAMVELAKAMAQLRVVETIKKNIAR.

Belongs to the ATPase epsilon chain family. In terms of assembly, F-type ATPases have 2 components, CF(1) - the catalytic core - and CF(0) - the membrane proton channel. CF(1) has five subunits: alpha(3), beta(3), gamma(1), delta(1), epsilon(1). CF(0) has three main subunits: a, b and c.

The protein resides in the cell inner membrane. Functionally, produces ATP from ADP in the presence of a proton gradient across the membrane. The chain is ATP synthase epsilon chain from Shewanella baltica (strain OS155 / ATCC BAA-1091).